Here is a 213-residue protein sequence, read N- to C-terminus: Pyridoxine/pyridoxamine 5'-phosphate oxidase (213 aa).

Substrate is bound by residues 8-11 (RKNY) and Lys-66. FMN-binding positions include 61–66 (RIVLIK), 76–77 (FT), Arg-82, Lys-83, and Gln-105. 3 residues coordinate substrate: Tyr-123, Arg-127, and Ser-131. FMN contacts are provided by residues 140 to 141 (QS) and Trp-184. A substrate-binding site is contributed by 190 to 192 (RLH). Arg-194 serves as a coordination point for FMN.

The protein belongs to the pyridoxamine 5'-phosphate oxidase family. Homodimer. FMN serves as cofactor.

The catalysed reaction is pyridoxamine 5'-phosphate + O2 + H2O = pyridoxal 5'-phosphate + H2O2 + NH4(+). It carries out the reaction pyridoxine 5'-phosphate + O2 = pyridoxal 5'-phosphate + H2O2. It functions in the pathway cofactor metabolism; pyridoxal 5'-phosphate salvage; pyridoxal 5'-phosphate from pyridoxamine 5'-phosphate: step 1/1. Its pathway is cofactor metabolism; pyridoxal 5'-phosphate salvage; pyridoxal 5'-phosphate from pyridoxine 5'-phosphate: step 1/1. Functionally, catalyzes the oxidation of either pyridoxine 5'-phosphate (PNP) or pyridoxamine 5'-phosphate (PMP) into pyridoxal 5'-phosphate (PLP). The sequence is that of Pyridoxine/pyridoxamine 5'-phosphate oxidase from Paraburkholderia phytofirmans (strain DSM 17436 / LMG 22146 / PsJN) (Burkholderia phytofirmans).